Here is a 367-residue protein sequence, read N- to C-terminus: tRNA pseudouridine synthase D (367 aa).

The active-site Nucleophile is the Asp-80. Residues 156–316 form the TRUD domain; that stretch reads GIPNWFGEQR…LKQERRALRL (161 aa).

Belongs to the pseudouridine synthase TruD family.

It catalyses the reaction uridine(13) in tRNA = pseudouridine(13) in tRNA. In terms of biological role, responsible for synthesis of pseudouridine from uracil-13 in transfer RNAs. The chain is tRNA pseudouridine synthase D from Xanthomonas campestris pv. campestris (strain B100).